Reading from the N-terminus, the 140-residue chain is Small ribosomal subunit protein uS12 (140 aa).

The tract at residues 1-28 (MPTINQLVRKSRKALEKKSTAPALQKGY) is disordered. 3-methylthioaspartic acid is present on aspartate 102. Residues 119 to 140 (GVDKRRQSRSKYGAKRPKEAKK) form a disordered region. Basic residues predominate over residues 124 to 140 (RQSRSKYGAKRPKEAKK).

Belongs to the universal ribosomal protein uS12 family. Part of the 30S ribosomal subunit. Contacts proteins S8 and S17. May interact with IF1 in the 30S initiation complex.

Functionally, with S4 and S5 plays an important role in translational accuracy. Interacts with and stabilizes bases of the 16S rRNA that are involved in tRNA selection in the A site and with the mRNA backbone. Located at the interface of the 30S and 50S subunits, it traverses the body of the 30S subunit contacting proteins on the other side and probably holding the rRNA structure together. The combined cluster of proteins S8, S12 and S17 appears to hold together the shoulder and platform of the 30S subunit. The chain is Small ribosomal subunit protein uS12 from Clostridioides difficile (strain 630) (Peptoclostridium difficile).